Reading from the N-terminus, the 1072-residue chain is DNA-directed RNA polymerase subunit beta (1072 aa).

This sequence belongs to the RNA polymerase beta chain family. In plastids the minimal PEP RNA polymerase catalytic core is composed of four subunits: alpha, beta, beta', and beta''. When a (nuclear-encoded) sigma factor is associated with the core the holoenzyme is formed, which can initiate transcription.

Its subcellular location is the plastid. It is found in the chloroplast. The enzyme catalyses RNA(n) + a ribonucleoside 5'-triphosphate = RNA(n+1) + diphosphate. In terms of biological role, DNA-dependent RNA polymerase catalyzes the transcription of DNA into RNA using the four ribonucleoside triphosphates as substrates. The polypeptide is DNA-directed RNA polymerase subunit beta (Olimarabidopsis pumila (Dwarf rocket)).